Reading from the N-terminus, the 382-residue chain is Glutaminyl-peptide cyclotransferase-like protein (382 aa).

Residues 35-55 (LLPLLLALAVGSAFYTIWSGW) form a helical membrane-spanning segment. Cysteine 167 and cysteine 191 are oxidised to a cystine. Aspartate 186 provides a ligand contact to Zn(2+). Glutamate 225 functions as the Proton acceptor in the catalytic mechanism. Glutamate 226 lines the Zn(2+) pocket. Aspartate 269 serves as the catalytic Proton acceptor. Zn(2+) is bound at residue histidine 351.

Belongs to the glutaminyl-peptide cyclotransferase family.

The protein resides in the golgi apparatus membrane. It carries out the reaction N-terminal L-glutaminyl-[peptide] = N-terminal 5-oxo-L-prolyl-[peptide] + NH4(+). In terms of biological role, responsible for the biosynthesis of pyroglutamyl peptides. In Macaca fascicularis (Crab-eating macaque), this protein is Glutaminyl-peptide cyclotransferase-like protein (QPCTL).